A 357-amino-acid polypeptide reads, in one-letter code: Red-sensitive opsin-1 (357 aa).

Residues 1–49 (MAEHWGDAIYAARRKGDETTREAMFTYTNSNNTKDPFEGPNYHIAPRWV) are Extracellular-facing. A glycan (N-linked (GlcNAc...) asparagine) is linked at asparagine 31. The chain crosses the membrane as a helical span at residues 50 to 74 (YNVATVWMFFVVVASTFTNGLVLVA). Residues 75 to 86 (TAKFKKLRHPLN) lie on the Cytoplasmic side of the membrane. A helical membrane pass occupies residues 87 to 112 (WILVNLAIADLGETLFASTISVINQF). Over 113-126 (FGYFILGHPMCIFE) the chain is Extracellular. Cysteines 123 and 200 form a disulfide. A helical transmembrane segment spans residues 127 to 146 (GYTVSVCGIAALWSLTVISW). Over 147 to 165 (ERWVVVCKPFGNVKFDAKW) the chain is Cytoplasmic. The chain crosses the membrane as a helical span at residues 166–189 (ASAGIIFSWVWAAAWCAPPIFGWS). At 190 to 215 (RYWPHGLKTSCGPDVFSGSEDPGVQS) the chain is on the extracellular side. The chain crosses the membrane as a helical span at residues 216-243 (YMVVLMITCCIIPLAIIILCYIAVYLAI). The Cytoplasmic segment spans residues 244-265 (HAVAQQQKDSESTQKAEKEVSR). The chain crosses the membrane as a helical span at residues 266–289 (MVVVMIFAYCFCWGPYTFFACFAA). Topologically, residues 290 to 297 (ANPGYAFH) are extracellular. A helical membrane pass occupies residues 298–322 (PLAAAMPAYFAKSATIYNPVIYVFM). Residue lysine 309 is modified to N6-(retinylidene)lysine. The Cytoplasmic portion of the chain corresponds to 323-357 (NRQFRVCIMQLFGKKVDDGSEVSTSKTEVSSVAPA).

Belongs to the G-protein coupled receptor 1 family. Opsin subfamily. Phosphorylated on some or all of the serine and threonine residues present in the C-terminal region. As to expression, retinal double cone principal photoreceptor cell outer segments.

Its subcellular location is the membrane. Functionally, visual pigments are the light-absorbing molecules that mediate vision. They consist of an apoprotein, opsin, covalently linked to cis-retinal. In Danio rerio (Zebrafish), this protein is Red-sensitive opsin-1 (opn1lw1).